The sequence spans 380 residues: MKYFFSLPFPKVHTTCKHTAAATASQPLQKIRERLESGPGFQEFVQNPSYNREDWSAYEGKLKREKGEQDRLRLPPWLKTKIPMGKNFSRIKDQLRELKLATVCEEAKCPNIGECWGGGEHGTQTATIMLMGDTCTRGCRFCSVKTARAPPPLDPDEPKKTASAIASWGLDYIVLTSVDRDDLPDGGSNHIAETIREIKRQNPRIFVECLAPDFRGNLDCIRTVATSGLDVYAHNIETVESLTPFVRDRRAEYRQSLKCLASVKEINPNMVTKTSIMLGLGETDEQVEQTMKDLRAVGVDCLTLGQYMQPTKRHLKVIEYVTPEKFKHWETRGNELGFLYTASGPLVRSSYKAGEFFITSILKNRAAAAAEEATATKPSE.

[4Fe-4S] cluster-binding residues include C104, C109, C115, C135, C139, C142, and S350. The region spanning 120 to 339 (EHGTQTATIM…ETRGNELGFL (220 aa)) is the Radical SAM core domain.

This sequence belongs to the radical SAM superfamily. Lipoyl synthase family. It depends on [4Fe-4S] cluster as a cofactor.

It is found in the mitochondrion. It carries out the reaction [[Fe-S] cluster scaffold protein carrying a second [4Fe-4S](2+) cluster] + N(6)-octanoyl-L-lysyl-[protein] + 2 oxidized [2Fe-2S]-[ferredoxin] + 2 S-adenosyl-L-methionine + 4 H(+) = [[Fe-S] cluster scaffold protein] + N(6)-[(R)-dihydrolipoyl]-L-lysyl-[protein] + 4 Fe(3+) + 2 hydrogen sulfide + 2 5'-deoxyadenosine + 2 L-methionine + 2 reduced [2Fe-2S]-[ferredoxin]. The protein operates within protein modification; protein lipoylation via endogenous pathway; protein N(6)-(lipoyl)lysine from octanoyl-[acyl-carrier-protein]: step 2/2. Its function is as follows. Catalyzes the radical-mediated insertion of two sulfur atoms into the C-6 and C-8 positions of the octanoyl moiety bound to the lipoyl domains of lipoate-dependent enzymes, thereby converting the octanoylated domains into lipoylated derivatives. This Culex quinquefasciatus (Southern house mosquito) protein is Lipoyl synthase, mitochondrial.